Here is a 611-residue protein sequence, read N- to C-terminus: E-selectin (611 aa).

A signal peptide spans 1-22; sequence MITSQLLPALTLVLLLFKEGGA. The C-type lectin domain maps to 23-140; it reads WSYNASTEAM…CDKKKLALCY (118 aa). The Extracellular portion of the chain corresponds to 23-557; that stretch reads WSYNASTEAM…CEAPTESSIP (535 aa). A glycan (N-linked (GlcNAc...) asparagine) is linked at N26. 19 cysteine pairs are disulfide-bonded: C41–C139, C112–C131, C144–C155, C149–C164, C166–C175, C181–C225, C194–C207, C211–C238, C243–C287, C256–C269, C273–C300, C305–C350, C336–C363, C368–C413, C399–C426, C431–C476, C462–C489, C494–C535, and C521–C548. Ca(2+)-binding residues include E102, N104, and E110. A carbohydrate-binding positions include 102–110, 114–119, and 127–129; these read EPNNKQNDE, EIYIKR, and NDE. Positions 127 and 128 each coordinate Ca(2+). Residues 141-176 form the EGF-like domain; the sequence is TAACTPTSCSGHGECVETVNNYTCKCHPGFRGLRCE. The N-linked (GlcNAc...) asparagine glycan is linked to N161. 2 Sushi domains span residues 179–240 and 241–302; these read VTCQ…ACNV and VECS…TCKA. N204 carries an N-linked (GlcNAc...) asparagine glycan. A glycan (N-linked (GlcNAc...) asparagine) is linked at N266. N313 and N333 each carry an N-linked (GlcNAc...) asparagine glycan. Sushi domains lie at 316 to 365, 367 to 428, 430 to 491, and 492 to 550; these read VSCS…VCKA, QCKA…TCEA, KCDA…SCQV, and VQCF…TCEA. An N-linked (GlcNAc...) asparagine glycan is attached at N528. A helical transmembrane segment spans residues 558–579; sequence LAVGLTAGGTSLLTVASFLLWL. Topologically, residues 580-611 are cytoplasmic; sequence LKRLRKRAKKFVPASSCQSLQSDGSYHMPCSI.

This sequence belongs to the selectin/LECAM family. Interacts with SELPLG/PSGL1 and PODXL2 through the sialyl Lewis X epitope. SELPLG sulfation appears not to be required for this interaction.

It localises to the cell membrane. Its function is as follows. Cell-surface glycoprotein having a role in immunoadhesion. Mediates in the adhesion of blood neutrophils in cytokine-activated endothelium through interaction with SELPLG/PSGL1. May have a role in capillary morphogenesis. The protein is E-selectin (SELE) of Canis lupus familiaris (Dog).